Consider the following 90-residue polypeptide: Conotoxin Rg9.1 (90 aa).

The signal sequence occupies residues 1–20; sequence MHLSLARSAVLILLLLFALG. Positions 21 to 60 are excised as a propeptide; it reads NFVGVQPGQITRDADHGINLRSLRKQMSRSPLVKGAFCGQ. 3 cysteine pairs are disulfide-bonded: Cys-58–Cys-71, Cys-62–Cys-73, and Cys-67–Cys-80.

The protein belongs to the conotoxin P superfamily. Expressed by the venom duct.

It is found in the secreted. In terms of biological role, probable neurotoxin that inhibits ion channels. The polypeptide is Conotoxin Rg9.1 (Conus regius (Crown cone)).